The chain runs to 380 residues: Cytochrome b (380 aa).

4 helical membrane-spanning segments follow: residues 33 to 53 (FGSL…FLAM), 77 to 98 (WLIR…YLHI), 113 to 133 (WNIG…GYVL), and 178 to 198 (FFAF…LHFF). Positions 83 and 97 each coordinate heme b. Positions 182 and 196 each coordinate heme b. Position 201 (histidine 201) interacts with a ubiquinone. A run of 4 helical transmembrane segments spans residues 226 to 246 (YKDL…SFFS), 288 to 308 (LGGV…PILH), 320 to 340 (LTQL…WIGG), and 347 to 367 (FIAV…ILIP).

Belongs to the cytochrome b family. As to quaternary structure, the cytochrome bc1 complex contains 3 respiratory subunits (MT-CYB, CYC1 and UQCRFS1), 2 core proteins (UQCRC1 and UQCRC2) and probably 6 low-molecular weight proteins. It depends on heme b as a cofactor.

It is found in the mitochondrion inner membrane. Its function is as follows. Component of the ubiquinol-cytochrome c reductase complex (complex III or cytochrome b-c1 complex) that is part of the mitochondrial respiratory chain. The b-c1 complex mediates electron transfer from ubiquinol to cytochrome c. Contributes to the generation of a proton gradient across the mitochondrial membrane that is then used for ATP synthesis. The chain is Cytochrome b (mt-cyb) from Zenopsis nebulosa (Mirror dory).